The primary structure comprises 165 residues: C-phycoerythrin class 2 subunit alpha (165 aa).

C75, C83, and C140 together coordinate phycourobilin.

Belongs to the phycobiliprotein family. In terms of assembly, heterodimer of an alpha and a beta chain. Contains three covalently linked phycourobilin chromophores.

It is found in the cellular thylakoid membrane. In terms of biological role, light-harvesting photosynthetic bile pigment-protein from the phycobiliprotein complex. The protein is C-phycoerythrin class 2 subunit alpha (mpeA) of Synechococcus sp. (strain WH8103).